A 415-amino-acid polypeptide reads, in one-letter code: Imidazolonepropionase (415 aa).

Fe(3+) is bound by residues histidine 76 and histidine 78. The Zn(2+) site is built by histidine 76 and histidine 78. 4-imidazolone-5-propanoate-binding residues include arginine 85, tyrosine 148, and histidine 181. Position 148 (tyrosine 148) interacts with N-formimidoyl-L-glutamate. Position 246 (histidine 246) interacts with Fe(3+). Histidine 246 is a binding site for Zn(2+). Residue glutamate 249 participates in 4-imidazolone-5-propanoate binding. Aspartate 320 lines the Fe(3+) pocket. Aspartate 320 contributes to the Zn(2+) binding site. Residues asparagine 322 and glycine 324 each coordinate N-formimidoyl-L-glutamate. Position 325 (threonine 325) interacts with 4-imidazolone-5-propanoate.

This sequence belongs to the metallo-dependent hydrolases superfamily. HutI family. The cofactor is Zn(2+). Fe(3+) serves as cofactor.

The protein localises to the cytoplasm. It carries out the reaction 4-imidazolone-5-propanoate + H2O = N-formimidoyl-L-glutamate. Its pathway is amino-acid degradation; L-histidine degradation into L-glutamate; N-formimidoyl-L-glutamate from L-histidine: step 3/3. Functionally, catalyzes the hydrolytic cleavage of the carbon-nitrogen bond in imidazolone-5-propanoate to yield N-formimidoyl-L-glutamate. It is the third step in the universal histidine degradation pathway. This is Imidazolonepropionase from Thermoanaerobacter pseudethanolicus (strain ATCC 33223 / 39E) (Clostridium thermohydrosulfuricum).